Consider the following 48-residue polypeptide: uncharacterized protein (48 aa).

The chain crosses the membrane as a helical span at residues 25 to 47 (TFASIGVTVGVQIVILLIWGLSW).

The protein localises to the membrane. This is an uncharacterized protein from Archaeoglobus fulgidus (strain ATCC 49558 / DSM 4304 / JCM 9628 / NBRC 100126 / VC-16).